Consider the following 308-residue polypeptide: N-acetyl-gamma-glutamyl-phosphate reductase (308 aa).

The active site involves Cys-117.

Belongs to the NAGSA dehydrogenase family. Type 2 subfamily.

Its subcellular location is the cytoplasm. The catalysed reaction is N-acetyl-L-glutamate 5-semialdehyde + phosphate + NADP(+) = N-acetyl-L-glutamyl 5-phosphate + NADPH + H(+). The protein operates within amino-acid biosynthesis; L-arginine biosynthesis; N(2)-acetyl-L-ornithine from L-glutamate: step 3/4. Functionally, catalyzes the NADPH-dependent reduction of N-acetyl-5-glutamyl phosphate to yield N-acetyl-L-glutamate 5-semialdehyde. The chain is N-acetyl-gamma-glutamyl-phosphate reductase from Sinorhizobium fredii (strain NBRC 101917 / NGR234).